Reading from the N-terminus, the 210-residue chain is Prolactin-2 (210 aa).

The N-terminal stretch at 1 to 23 (MARRSQGTKLHLAVLCLVVSCHA) is a signal peptide. 2 disulfide bridges follow: C69-C183 and C200-C210.

It belongs to the somatotropin/prolactin family.

Its subcellular location is the secreted. The protein is Prolactin-2 (prl2) of Oncorhynchus keta (Chum salmon).